The following is a 309-amino-acid chain: Homoserine kinase (309 aa).

Residue 91–101 (PIGSGLGSSAC) participates in ATP binding.

The protein belongs to the GHMP kinase family. Homoserine kinase subfamily.

It localises to the cytoplasm. The catalysed reaction is L-homoserine + ATP = O-phospho-L-homoserine + ADP + H(+). It participates in amino-acid biosynthesis; L-threonine biosynthesis; L-threonine from L-aspartate: step 4/5. In terms of biological role, catalyzes the ATP-dependent phosphorylation of L-homoserine to L-homoserine phosphate. This chain is Homoserine kinase, found in Salmonella agona (strain SL483).